The primary structure comprises 121 residues: Ribonuclease P protein component (121 aa).

It belongs to the RnpA family. As to quaternary structure, consists of a catalytic RNA component (M1 or rnpB) and a protein subunit.

The enzyme catalyses Endonucleolytic cleavage of RNA, removing 5'-extranucleotides from tRNA precursor.. RNaseP catalyzes the removal of the 5'-leader sequence from pre-tRNA to produce the mature 5'-terminus. It can also cleave other RNA substrates such as 4.5S RNA. The protein component plays an auxiliary but essential role in vivo by binding to the 5'-leader sequence and broadening the substrate specificity of the ribozyme. This chain is Ribonuclease P protein component, found in Neisseria meningitidis serogroup A / serotype 4A (strain DSM 15465 / Z2491).